Consider the following 195-residue polypeptide: uncharacterized protein (195 aa).

Positions 1–17 (MKASLITAFVLPLLALA) are cleaved as a signal peptide. The N-linked (GlcNAc...) asparagine glycan is linked to N75.

The protein localises to the secreted. This is an uncharacterized protein from Arthroderma benhamiae (strain ATCC MYA-4681 / CBS 112371) (Trichophyton mentagrophytes).